A 613-amino-acid polypeptide reads, in one-letter code: MPKYRSATTTHGRNMAGARALWRATGVKDEDFGKPIIAVVNSFTQFVPGHVHLKDLGQLVAREIEAAGGIAKEFNTIAVDDGIAMGHGGMLYSLPSRELIADSVEYMVNAHCADAMVCISNCDKITPGMLMASMRLNIPVIFVSGGPMEAGKTKLSDQIIKLDLVDAMIQGADPKVSDEQSEQIERSACPTCGSCSGMFTANSMNCLTEALGLSQPGNGSLLATHADRKQLFISAGQRIVELTKRYYEQDDESALPRNIATKAAFENAMALDIAMGGSTNTVLHLLAAAQEGEVDFDMTDIDRMSRMVPHLCKVAPSTQKYHMEDVHRAGGVVGILGELNRAGLLHNQSKTVLGLTWEEQLAQYDIMLTDSEEVKRFYRAGPAGIRTTQAFSQDCRWDTLDDDRAQGCIRTKENAFSQDGGLAVLKGNIALDGCIVKTAGVDESILKFTGPAVVFESQEDAVEGILGGKVKAGDVVVIRYEGPKGGPGMQEMLYPTTYLKSMGLGKACALLTDGRFSGGTSGLSIGHASPEAANGGAIGLVKQGDLIAIDIPNRTISLQVSDQEMAERRAEQDALGWKPVSRQREVSFALKAYASMATSADKGAVRDKSKLEG.

Asp81 contacts Mg(2+). [2Fe-2S] cluster is bound at residue Cys122. Residues Asp123 and Lys124 each contribute to the Mg(2+) site. Lys124 is modified (N6-carboxylysine). Cys195 lines the [2Fe-2S] cluster pocket. Mg(2+) is bound at residue Glu491. The active-site Proton acceptor is the Ser517.

Belongs to the IlvD/Edd family. In terms of assembly, homodimer. The cofactor is [2Fe-2S] cluster. Mg(2+) is required as a cofactor.

It carries out the reaction (2R)-2,3-dihydroxy-3-methylbutanoate = 3-methyl-2-oxobutanoate + H2O. The catalysed reaction is (2R,3R)-2,3-dihydroxy-3-methylpentanoate = (S)-3-methyl-2-oxopentanoate + H2O. Its pathway is amino-acid biosynthesis; L-isoleucine biosynthesis; L-isoleucine from 2-oxobutanoate: step 3/4. The protein operates within amino-acid biosynthesis; L-valine biosynthesis; L-valine from pyruvate: step 3/4. Its function is as follows. Functions in the biosynthesis of branched-chain amino acids. Catalyzes the dehydration of (2R,3R)-2,3-dihydroxy-3-methylpentanoate (2,3-dihydroxy-3-methylvalerate) into 2-oxo-3-methylpentanoate (2-oxo-3-methylvalerate) and of (2R)-2,3-dihydroxy-3-methylbutanoate (2,3-dihydroxyisovalerate) into 2-oxo-3-methylbutanoate (2-oxoisovalerate), the penultimate precursor to L-isoleucine and L-valine, respectively. This Vibrio vulnificus (strain CMCP6) protein is Dihydroxy-acid dehydratase.